The primary structure comprises 464 residues: Transcription factor EAT1 (464 aa).

The basic motif; degenerate stretch occupies residues 261-274; that stretch reads GKGKANFATERERR. Residues 261-310 enclose the bHLH domain; sequence GKGKANFATERERREQLNVKFRTLRMLFPNPTKNDRASIVGDAIEYIDEL. A helix-loop-helix motif region spans residues 275 to 310; the sequence is EQLNVKFRTLRMLFPNPTKNDRASIVGDAIEYIDEL. The tract at residues 338 to 357 is disordered; the sequence is QEAAADGESSSMRPVRDDQD.

Belongs to the bHLH protein family. As to quaternary structure, interacts with TDR.

It localises to the nucleus. Functionally, transcription factor involved in the regulation of tapetum programmed cell death (PCD) and degradation during male reproductive development. Interacts with TDR and promote tapetal PCD by regulating the expression of RTS, and the two lipid-transfer proteins C4 and C6, which function in microspore development. Acts downstream from and interacts with TDR in the regulation of tapetal PCD. Regulates directly the aspartic protease AP25 and AP37 during tapetal PCD. May not target the cysteine protease CP1. The sequence is that of Transcription factor EAT1 from Oryza sativa subsp. japonica (Rice).